Here is a 93-residue protein sequence, read N- to C-terminus: Mitochondrial import inner membrane translocase subunit Tim10-A (93 aa).

Residues C32–C57 carry the Twin CX3C motif motif. 2 disulfide bridges follow: C32–C57 and C36–C53.

It belongs to the small Tim family. Heterohexamer; composed of 3 copies of TIMM9 and 3 copies of TIMM10/TIM10A, named soluble 70 kDa complex. The complex forms a 6-bladed alpha-propeller structure and associates with the TIMM22 component of the TIM22 complex. Interacts with multi-pass transmembrane proteins in transit.

It localises to the mitochondrion inner membrane. Functionally, mitochondrial intermembrane chaperone that participates in the import and insertion of multi-pass transmembrane proteins into the mitochondrial inner membrane. May also be required for the transfer of beta-barrel precursors from the TOM complex to the sorting and assembly machinery (SAM complex) of the outer membrane. Acts as a chaperone-like protein that protects the hydrophobic precursors from aggregation and guide them through the mitochondrial intermembrane space. The protein is Mitochondrial import inner membrane translocase subunit Tim10-A (timm10-a) of Xenopus laevis (African clawed frog).